The primary structure comprises 113 residues: Protein SPIRAL1-like 1 (113 aa).

The segment covering 1 to 12 (MGRGVSVGGGQS) has biased composition (gly residues). The interval 1-50 (MGRGVSVGGGQSSLGYLFGSGEAPKPAINNAPAPSSETLPISADPSPKHV) is disordered. Low complexity predominate over residues 23–34 (APKPAINNAPAP). At S69 the chain carries Phosphoserine. A disordered region spans residues 79-113 (QNTGNFLTDRPSTKVHAAPGGGSSLDYLFGGGGSN). Over residues 97 to 113 (PGGGSSLDYLFGGGGSN) the composition is skewed to gly residues.

The protein belongs to the SPIRAL1 family. Detected in pollen of mature flowers.

In terms of biological role, acts redundantly with SPR1 in maintaining the cortical microtubules organization essential for anisotropic cell growth. The polypeptide is Protein SPIRAL1-like 1 (SP1L1) (Arabidopsis thaliana (Mouse-ear cress)).